Here is a 422-residue protein sequence, read N- to C-terminus: Histidine--tRNA ligase (422 aa).

It belongs to the class-II aminoacyl-tRNA synthetase family. Homodimer.

The protein resides in the cytoplasm. It catalyses the reaction tRNA(His) + L-histidine + ATP = L-histidyl-tRNA(His) + AMP + diphosphate + H(+). This chain is Histidine--tRNA ligase, found in Vibrio campbellii (strain ATCC BAA-1116).